The primary structure comprises 333 residues: tRNA uridine(34) hydroxylase (333 aa).

Residues 123-217 form the Rhodanese domain; sequence SDPEVVLVDT…YLEEVNKAES (95 aa). The active-site Cysteine persulfide intermediate is cysteine 177. Over residues 313–327 the composition is skewed to basic and acidic residues; it reads QKKEALRKQSAEKNK. The interval 313–333 is disordered; it reads QKKEALRKQSAEKNKAKQANA.

This sequence belongs to the TrhO family.

It catalyses the reaction uridine(34) in tRNA + AH2 + O2 = 5-hydroxyuridine(34) in tRNA + A + H2O. Catalyzes oxygen-dependent 5-hydroxyuridine (ho5U) modification at position 34 in tRNAs. The polypeptide is tRNA uridine(34) hydroxylase (Shewanella oneidensis (strain ATCC 700550 / JCM 31522 / CIP 106686 / LMG 19005 / NCIMB 14063 / MR-1)).